Reading from the N-terminus, the 344-residue chain is Succinylglutamate desuccinylase (344 aa).

3 residues coordinate Zn(2+): His-63, Glu-66, and His-160. Glu-224 is an active-site residue.

This sequence belongs to the AspA/AstE family. Succinylglutamate desuccinylase subfamily. Zn(2+) is required as a cofactor.

It catalyses the reaction N-succinyl-L-glutamate + H2O = L-glutamate + succinate. It participates in amino-acid degradation; L-arginine degradation via AST pathway; L-glutamate and succinate from L-arginine: step 5/5. Its function is as follows. Transforms N(2)-succinylglutamate into succinate and glutamate. In Shewanella sp. (strain MR-4), this protein is Succinylglutamate desuccinylase.